The primary structure comprises 317 residues: Ribosomal protein L11 methyltransferase (317 aa).

Residues threonine 158, glycine 179, aspartate 201, and asparagine 244 each contribute to the S-adenosyl-L-methionine site.

The protein belongs to the methyltransferase superfamily. PrmA family.

Its subcellular location is the cytoplasm. The enzyme catalyses L-lysyl-[protein] + 3 S-adenosyl-L-methionine = N(6),N(6),N(6)-trimethyl-L-lysyl-[protein] + 3 S-adenosyl-L-homocysteine + 3 H(+). Its function is as follows. Methylates ribosomal protein L11. The chain is Ribosomal protein L11 methyltransferase from Streptococcus uberis (strain ATCC BAA-854 / 0140J).